Reading from the N-terminus, the 163-residue chain is Disulfide bond formation protein B 1 (163 aa).

At 1 to 9 (MPLASPRQL) the chain is on the cytoplasmic side. The chain crosses the membrane as a helical span at residues 10-26 (FLLAFLACVAIMGGALY). At 27-44 (LEHVVGLEACPLCVVQRI) the chain is on the periplasmic side. A disulfide bridge connects residues Cys-36 and Cys-39. A helical transmembrane segment spans residues 45-61 (FFILIGLTCLAGAIQGP). Topologically, residues 62-67 (GLRGRR) are cytoplasmic. The chain crosses the membrane as a helical span at residues 68–85 (IYSVLVFLLALGGGATAA). Topologically, residues 86–142 (RQVWLQTVPLDQLPACLPSLDYMMQALPFQEVIRLVLHGTADCAQVSWTLFTLSIPE) are periplasmic. Cysteines 101 and 128 form a disulfide. A helical membrane pass occupies residues 143–161 (WSLLAFVAYLGFSIVQFLR). The Cytoplasmic segment spans residues 162–163 (RA).

This sequence belongs to the DsbB family.

The protein localises to the cell inner membrane. Its function is as follows. Required for disulfide bond formation in some periplasmic proteins. Acts by oxidizing the DsbA protein. The sequence is that of Disulfide bond formation protein B 1 (dsbB1) from Pseudomonas aeruginosa (strain ATCC 15692 / DSM 22644 / CIP 104116 / JCM 14847 / LMG 12228 / 1C / PRS 101 / PAO1).